The following is a 135-amino-acid chain: Large ribosomal subunit protein mL61 (135 aa).

Residues 114–129 (HHESSPENIKEAHKQD) are compositionally biased toward basic and acidic residues. The segment at 114-135 (HHESSPENIKEAHKQDYSPPSN) is disordered.

It belongs to the mitochondrion-specific ribosomal protein mL61 family. Component of the mitochondrial large ribosomal subunit (mt-LSU). Mature yeast 74S mitochondrial ribosomes consist of a small (37S) and a large (54S) subunit. The 37S small subunit contains a 15S ribosomal RNA (15S mt-rRNA) and at least 32 different proteins. The 54S large subunit contains a 21S rRNA (21S mt-rRNA) and at least 45 different proteins.

The protein localises to the mitochondrion. Functionally, component of the mitochondrial ribosome (mitoribosome), a dedicated translation machinery responsible for the synthesis of mitochondrial genome-encoded proteins, including at least some of the essential transmembrane subunits of the mitochondrial respiratory chain. The mitoribosomes are attached to the mitochondrial inner membrane and translation products are cotranslationally integrated into the membrane. mL61 is not essential in cells grown at 30 degrees Celsius but is required for mitochondrial translation in cells grown at 18 degrees Celsius. The protein is Large ribosomal subunit protein mL61 (mrp49) of Schizosaccharomyces pombe (strain 972 / ATCC 24843) (Fission yeast).